Here is a 227-residue protein sequence, read N- to C-terminus: MIIKEYISGISTIGVLSLSTEKFGLAPYFAEENTINKFKKVLDVPVKALNIGNSSLIGALCCANSYGIILPPFTLNREKTILSDFLKENDIDIIVKEINAKNTAFGNLILLNDKGCIISEELADFRKTFEDIFDVEVVAKNIAELPTVGSNGVATNKGALVHPDTTDEELELIKDVLKLKCIERGTASKGTPSVGACIVANSNGAVIGGDTTGPEMLKIEEGLDLID.

This sequence belongs to the eIF-6 family.

Its function is as follows. Binds to the 50S ribosomal subunit and prevents its association with the 30S ribosomal subunit to form the 70S initiation complex. This Methanococcus aeolicus (strain ATCC BAA-1280 / DSM 17508 / OCM 812 / Nankai-3) protein is Translation initiation factor 6.